The sequence spans 356 residues: Biotin synthase (356 aa).

The disordered stretch occupies residues 1–28 (MTIQANVPTGDETSDEASRQTSNEASSE). A Radical SAM core domain is found at 77–302 (EDVEVEGIIS…RTVLRYAGGR (226 aa)). Residues C92, C96, and C99 each contribute to the [4Fe-4S] cluster site. [2Fe-2S] cluster is bound by residues C135, C168, C227, and R297.

Belongs to the radical SAM superfamily. Biotin synthase family. Homodimer. Requires [4Fe-4S] cluster as cofactor. [2Fe-2S] cluster serves as cofactor.

It catalyses the reaction (4R,5S)-dethiobiotin + (sulfur carrier)-SH + 2 reduced [2Fe-2S]-[ferredoxin] + 2 S-adenosyl-L-methionine = (sulfur carrier)-H + biotin + 2 5'-deoxyadenosine + 2 L-methionine + 2 oxidized [2Fe-2S]-[ferredoxin]. It participates in cofactor biosynthesis; biotin biosynthesis; biotin from 7,8-diaminononanoate: step 2/2. In terms of biological role, catalyzes the conversion of dethiobiotin (DTB) to biotin by the insertion of a sulfur atom into dethiobiotin via a radical-based mechanism. The polypeptide is Biotin synthase (Arthrobacter sp. (strain FB24)).